The following is a 227-amino-acid chain: Ribonuclease 3 (227 aa).

Positions 6–128 (ASDYQQRIGY…VIAAIYLDAD (123 aa)) constitute an RNase III domain. A Mg(2+)-binding site is contributed by glutamate 41. Aspartate 45 is an active-site residue. Mg(2+) is bound by residues aspartate 114 and glutamate 117. Residue glutamate 117 is part of the active site. In terms of domain architecture, DRBM spans 155–225 (DPKTRLQEWL…ASHAIDQLDS (71 aa)). Residues 203–212 (GEGSSRRLAE) show a composition bias toward basic and acidic residues. The segment at 203 to 227 (GEGSSRRLAEQDAASHAIDQLDSNK) is disordered.

The protein belongs to the ribonuclease III family. In terms of assembly, homodimer. Requires Mg(2+) as cofactor.

Its subcellular location is the cytoplasm. It carries out the reaction Endonucleolytic cleavage to 5'-phosphomonoester.. In terms of biological role, digests double-stranded RNA. Involved in the processing of primary rRNA transcript to yield the immediate precursors to the large and small rRNAs (23S and 16S). Processes some mRNAs, and tRNAs when they are encoded in the rRNA operon. Processes pre-crRNA and tracrRNA of type II CRISPR loci if present in the organism. This chain is Ribonuclease 3, found in Xylella fastidiosa (strain 9a5c).